The sequence spans 272 residues: MSRAPDRIAACFDALRHSGRKALIPFITAGDPSLEATVPVMHALVRAGANIIELGVPFSDPMADGPTIQRSSERALGRGAGLAYVIEAVQEFRREDATTPVVLMGYLNPIEIHGTRRFAETAVAAGIDGVLLVDLPPEEADETRAIFTEVGLALIALASPTTGEARLDMLCSTAQGYLYYVSFSGVTGAADRLDTHAASDRLRQLRARAGAPVVAGFGIKDAASAAAMAVDADGVVVGSALVAALADASDVRSARERAEDFLQPLRQALDAG.

Catalysis depends on proton acceptor residues Glu-53 and Asp-64.

This sequence belongs to the TrpA family. As to quaternary structure, tetramer of two alpha and two beta chains.

It carries out the reaction (1S,2R)-1-C-(indol-3-yl)glycerol 3-phosphate + L-serine = D-glyceraldehyde 3-phosphate + L-tryptophan + H2O. It functions in the pathway amino-acid biosynthesis; L-tryptophan biosynthesis; L-tryptophan from chorismate: step 5/5. Its function is as follows. The alpha subunit is responsible for the aldol cleavage of indoleglycerol phosphate to indole and glyceraldehyde 3-phosphate. This Xanthomonas campestris pv. campestris (strain B100) protein is Tryptophan synthase alpha chain.